The chain runs to 652 residues: Oligopeptide-binding protein AliB (652 aa).

The first 24 residues, 1 to 24, serve as a signal peptide directing secretion; that stretch reads MKKSKSKYLTLAGLVLGTGVLLSA. Cys25 carries N-palmitoyl cysteine lipidation. Cys25 carries S-diacylglycerol cysteine lipidation.

This sequence belongs to the bacterial solute-binding protein 5 family.

It localises to the cell membrane. Its function is as follows. Part of the binding-protein-dependent transport system for oligopeptides; probably an oligopeptide binding protein. This chain is Oligopeptide-binding protein AliB (aliB), found in Streptococcus pneumoniae serotype 4 (strain ATCC BAA-334 / TIGR4).